Consider the following 206-residue polypeptide: Inner membrane protein YnjF (206 aa).

Residues Met1–Ala37 lie on the Periplasmic side of the membrane. Residues Ile38 to Leu60 form a helical membrane-spanning segment. At Asn61–Asp79 the chain is on the cytoplasmic side. Residues Ala80–Leu102 traverse the membrane as a helical segment. Over Ala103 to Ala111 the chain is Periplasmic. Residues Gly112–Ala134 form a helical membrane-spanning segment. The Cytoplasmic portion of the chain corresponds to Lys135–Lys146. A helical transmembrane segment spans residues Ser147–Leu169. The Periplasmic portion of the chain corresponds to Phe170–Trp173. Residues Phe174–Gly196 form a helical membrane-spanning segment. Over Tyr197–Gln206 the chain is Cytoplasmic.

It belongs to the CDP-alcohol phosphatidyltransferase class-I family.

The protein resides in the cell inner membrane. The protein is Inner membrane protein YnjF (ynjF) of Escherichia coli (strain K12).